We begin with the raw amino-acid sequence, 62 residues long: Large ribosomal subunit protein uL30 (62 aa).

It belongs to the universal ribosomal protein uL30 family. In terms of assembly, part of the 50S ribosomal subunit.

In Kosmotoga olearia (strain ATCC BAA-1733 / DSM 21960 / TBF 19.5.1), this protein is Large ribosomal subunit protein uL30.